Here is a 545-residue protein sequence, read N- to C-terminus: Pectinesterase/pectinesterase inhibitor (545 aa).

The N-terminal stretch at 1–37 (MEINQPNLLEASKSCYSKITFFLLVISFAALVSTGFS) is a signal peptide. The interval 38–191 (SPELSLHHKI…ILRARTSLAI (154 aa)) is pectinesterase inhibitor. Residues 38–228 (SPELSLHHKI…RRLLQTLGKD (191 aa)) constitute a propeptide that is removed on maturation. N-linked (GlcNAc...) asparagine glycosylation is present at N135. Residues 232-530 (DIVVAKDGSG…TVAELIQGGS (299 aa)) form a pectinesterase region. Substrate-binding residues include T307 and Q337. An intrachain disulfide couples C326 to C353. D360 functions as the Proton donor; for pectinesterase activity in the catalytic mechanism. A glycan (N-linked (GlcNAc...) (complex) asparagine) is linked at N375. D381 (nucleophile; for pectinesterase activity) is an active-site residue. C394 and C428 are oxidised to a cystine. Substrate is bound by residues R449 and W451.

It in the N-terminal section; belongs to the PMEI family. This sequence in the C-terminal section; belongs to the pectinesterase family. In terms of processing, N-glycosylated.

Its subcellular location is the secreted. The protein resides in the cell wall. It catalyses the reaction [(1-&gt;4)-alpha-D-galacturonosyl methyl ester](n) + n H2O = [(1-&gt;4)-alpha-D-galacturonosyl](n) + n methanol + n H(+). Its pathway is glycan metabolism; pectin degradation; 2-dehydro-3-deoxy-D-gluconate from pectin: step 1/5. In terms of biological role, acts in the modification of cell walls via demethylesterification of cell wall pectin. The chain is Pectinesterase/pectinesterase inhibitor from Ficus pumila var. awkeotsang (Jelly fig).